The following is a 318-amino-acid chain: D-alanine--D-alanine ligase B (318 aa).

In terms of domain architecture, ATP-grasp spans 116-311 (KQVWQSLGIP…FQQLVLAILA (196 aa)). Position 142–197 (142–197 (STELGFPLIVKPAHEGSSIGMAKVNSTQELVAAWQDAAKYDSQVLVEQWIHGPEFT)) interacts with ATP. 3 residues coordinate Mg(2+): Asp-265, Glu-278, and Asn-280.

Belongs to the D-alanine--D-alanine ligase family. Mg(2+) is required as a cofactor. Mn(2+) serves as cofactor.

It localises to the cytoplasm. It carries out the reaction 2 D-alanine + ATP = D-alanyl-D-alanine + ADP + phosphate + H(+). It functions in the pathway cell wall biogenesis; peptidoglycan biosynthesis. Cell wall formation. The polypeptide is D-alanine--D-alanine ligase B (Pseudomonas putida (strain ATCC 47054 / DSM 6125 / CFBP 8728 / NCIMB 11950 / KT2440)).